A 2768-amino-acid polypeptide reads, in one-letter code: Thyroglobulin (2768 aa).

The N-terminal stretch at 1-19 (MALVLEIFTLLASICWVSA) is a signal peptide. Tyr24 bears the Iodotyrosine; alternate mark. The residue at position 24 (Tyr24) is a Sulfotyrosine; alternate. Tyr24 carries the post-translational modification Thyroxine; alternate. Tyr24 bears the Triiodothyronine; alternate mark. Thyroglobulin type-1 domains follow at residues 31 to 92 (LRPC…PVAC), 93 to 160 (LSFC…PKRC), 161 to 297 (PRSC…RFRC), and 298 to 358 (PTKC…PPSC). 18 cysteine pairs are disulfide-bonded: Cys34–Cys52, Cys63–Cys70, Cys72–Cys92, Cys96–Cys120, Cys131–Cys138, Cys140–Cys160, Cys164–Cys183, Cys194–Cys235, Cys237–Cys297, Cys301–Cys319, Cys330–Cys336, Cys338–Cys358, Cys364–Cys620, Cys408–Cys608, Cys631–Cys636, Cys638–Cys658, Cys662–Cys687, and Cys698–Cys703. N-linked (GlcNAc...) asparagine glycosylation is present at Asn76. Position 108 is an iodotyrosine (Tyr108). Residue Asn110 is glycosylated (N-linked (GlcNAc...) asparagine). Tyr149 carries the iodotyrosine; alternate modification. A Diiodotyrosine; alternate modification is found at Tyr149. Residue Asn198 is glycosylated (N-linked (GlcNAc...) asparagine). 2 positions are modified to iodotyrosine: Tyr234 and Tyr258. 2 N-linked (GlcNAc...) asparagine glycosylation sites follow: Asn484 and Asn529. The tract at residues 521–545 (PLSVGLDSNSSTGTPEAAKKDGTMN) is disordered. Thyroglobulin type-1 domains lie at 605–658 (SQTC…QPRC), 659–726 (PTDC…PKKC), 727–921 (PTPC…LPTC), 922–1073 (PGSC…IPQC), 1074–1145 (PTTC…SAQC), and 1146–1210 (PSLC…QPAC). Tyr704 bears the Iodotyrosine; alternate mark. The residue at position 704 (Tyr704) is a Thyroxine; alternate. Tyr704 is subject to Triiodothyronine; alternate. Tyr704 is subject to Diiodotyrosine; alternate. Cystine bridges form between Cys705-Cys726, Cys730-Cys763, Cys774-Cys898, Cys900-Cys921, Cys925-Cys1031, Cys1042-Cys1049, Cys1051-Cys1073, Cys1077-Cys1108, Cys1126-Cys1145, Cys1149-Cys1169, Cys1181-Cys1188, Cys1190-Cys1210, Cys1215-Cys1264, Cys1231-Cys1245, Cys1306-Cys1356, and Cys1331-Cys1347. N-linked (GlcNAc...) asparagine glycosylation is present at Asn748. Tyr785 carries the iodotyrosine modification. Asn816 carries an N-linked (GlcNAc...) asparagine glycan. At Tyr866 the chain carries Iodotyrosine; alternate. Tyr866 carries the diiodotyrosine; alternate modification. Position 883 is a diiodotyrosine (Tyr883). Asn947 carries an N-linked (GlcNAc...) asparagine glycan. Tyr992 carries the iodotyrosine; alternate modification. Residue Tyr992 is modified to Diiodotyrosine; alternate. An N-linked (GlcNAc...) asparagine glycan is attached at Asn1220. Position 1310 is an iodotyrosine (Tyr1310). Tyr1310 carries the thyroxine modification. Residues Asn1348, Asn1349, and Asn1365 are each glycosylated (N-linked (GlcNAc...) asparagine). Cystine bridges form between Cys1440–Cys1459, Cys1462–Cys1473, Cys1476–Cys1490, Cys1493–Cys1510, Cys1514–Cys1523, Cys1543–Cys1565, Cys1603–Cys1627, Cys1607–Cys1613, and Cys1639–Cys1662. 3 Type II repeats span residues 1456-1469 (GLGC…SYSQ), 1470-1486 (DEEC…EQAG), and 1487-1503 (SLAC…ISAG). Position 1467 is an iodotyrosine; alternate (Tyr1467). The residue at position 1467 (Tyr1467) is a Diiodotyrosine; alternate. A Thyroglobulin type-1 11 domain is found at 1511-1565 (VTDCQRNEAGLQCDQNGQYRASQKDRGSGKAFCVDGEGRRLPWWETEAPLEDSQC). One copy of the Type IIIA repeat lies at 1603-1723 (CLTDCTEDEA…GANLTDAHLF (121 aa)). The N-linked (GlcNAc...) asparagine glycan is linked to Asn1716. 4 disulfide bridges follow: Cys1724–Cys1749, Cys1728–Cys1734, Cys1733–Cys1835, and Cys1760–Cys1777. The stretch at 1724 to 1892 (CLLACDRDLC…LFSAQQANLW (169 aa)) is one Type IIIB repeat. 2 N-linked (GlcNAc...) asparagine glycosylation sites follow: Asn1774 and Asn1869. 7 cysteine pairs are disulfide-bonded: Cys1893/Cys1919, Cys1897/Cys1904, Cys1928/Cys1939, Cys1996/Cys2024, Cys2000/Cys2006, Cys2005/Cys2076, and Cys2035/Cys2048. Residues 1893–1995 (CLSRCVQEHS…EKSISNGFFE (103 aa)) form a Type IIIA repeat. A Type IIIB repeat occupies 1996–2129 (CERRCDADPC…TSNFSAVRDL (134 aa)). The N-linked (GlcNAc...) asparagine glycan is linked to Asn2013. Residue Asn2122 is glycosylated (N-linked (GlcNAc...) asparagine). 3 disulfide bridges follow: Cys2130–Cys2154, Cys2134–Cys2140, and Cys2163–Cys2172. One copy of the Type IIIA repeat lies at 2130 to 2187 (CLSECSQHEACLITTLQTQPGAVRCMFYADTQSCTHSLQGQNCRLLLREEATHIYRKP). Tyr2184 carries the post-translational modification Iodotyrosine. Positions 2188-2768 (GISLLSYEAS…QEPGSKTYSK (581 aa)) are cholinesterase-like (ChEL). Asn2250 carries an N-linked (GlcNAc...) asparagine glycan. The cysteines at positions 2264 and 2281 are disulfide-linked. N-linked (GlcNAc...) asparagine glycosylation occurs at Asn2295. Cysteines 2442 and 2453 form a disulfide. Iodotyrosine is present on Tyr2540. Position 2573 is an iodotyrosine; alternate (Tyr2573). Tyr2573 carries the thyroxine; alternate modification. Tyr2573 carries the post-translational modification Triiodothyronine; alternate. Residue Tyr2573 is modified to Diiodotyrosine; alternate. A glycan (N-linked (GlcNAc...) asparagine) is linked at Asn2582. 2 positions are modified to iodotyrosine: Tyr2587 and Tyr2617. A disulfide bridge links Cys2591 with Cys2715. Tyr2697 bears the Diiodotyrosine mark. A disordered region spans residues 2727–2768 (TSADGAKGGQSAESEEEELTAGSGLREDLLSLQEPGSKTYSK). Ser2749 is a glycosylation site (O-linked (Xyl...) (chondroitin sulfate) serine). Tyr2766 is subject to Iodotyrosine; alternate. Tyr2766 is modified (thyroxine; alternate). Position 2766 is a triiodothyronine; alternate (Tyr2766). Tyr2766 is modified (diiodotyrosine; alternate).

This sequence belongs to the type-B carboxylesterase/lipase family. As to quaternary structure, monomer. Homodimer (via ChEL region); occurs in the endoplasmic reticulum and is required for export to the Golgi apparatus. Homooligomer; disulfide-linked; stored in this form in the thyroid follicle lumen. In terms of processing, iodinated on tyrosine residues by TPO. There are 4 pairs of iodinated tyrosines used for coupling: acceptor Tyr-24 is coupled to donor Tyr-149 or Tyr-234, acceptor Tyr-2573 is coupled to donor Tyr-2540, acceptor Tyr-2766 in monomer 1 is coupled to donor Tyr-2766 in monomer 2 and acceptor Tyr-1310 in monomer 1 is coupled to donor Tyr-108 in monomer 2. Sulfated tyrosines are desulfated during iodination. Post-translationally, undergoes sequential proteolysis by cathepsins to release thyroxine (T4) and triiodothyronine (T3) hormones. In the thyroid follicle lumen, cross-linked TG (storage form) is solubilized by limited proteolysis mediated by cathepsins CTSB and/or CTSL. Partially cleaved TG is further processed by CTSK/cathepsin K and/or CTSL resulting in the release of T4. Following endocytosis, further processing occurs leading to the release of T3 and more T4 hormones. In terms of tissue distribution, specifically expressed in the thyroid gland.

It localises to the secreted. Acts as a substrate for the production of iodinated thyroid hormones thyroxine (T4) and triiodothyronine (T3). The synthesis of T3 and T4 involves iodination of selected tyrosine residues of TG/thyroglobulin followed by their oxidative coupling in the thyroid follicle lumen. Following TG re-internalization and lysosomal-mediated proteolysis, T3 and T4 are released from the polypeptide backbone leading to their secretion into the bloodstream. One dimer produces 7 thyroid hormone molecules. This is Thyroglobulin from Homo sapiens (Human).